The chain runs to 116 residues: Small ribosomal subunit protein uS13m (116 aa).

This sequence belongs to the universal ribosomal protein uS13 family. In terms of assembly, part of the small ribosomal subunit.

Its subcellular location is the mitochondrion. Its function is as follows. Located at the top of the head of the small subunit, it contacts several helices of the 18S rRNA. The chain is Small ribosomal subunit protein uS13m (RPS13) from Daucus carota (Wild carrot).